The primary structure comprises 556 residues: 2-succinyl-5-enolpyruvyl-6-hydroxy-3-cyclohexene-1-carboxylate synthase (556 aa).

This sequence belongs to the TPP enzyme family. MenD subfamily. As to quaternary structure, homodimer. Requires Mg(2+) as cofactor. Mn(2+) is required as a cofactor. It depends on thiamine diphosphate as a cofactor.

The enzyme catalyses isochorismate + 2-oxoglutarate + H(+) = 5-enolpyruvoyl-6-hydroxy-2-succinyl-cyclohex-3-ene-1-carboxylate + CO2. It functions in the pathway quinol/quinone metabolism; 1,4-dihydroxy-2-naphthoate biosynthesis; 1,4-dihydroxy-2-naphthoate from chorismate: step 2/7. The protein operates within quinol/quinone metabolism; menaquinone biosynthesis. Functionally, catalyzes the thiamine diphosphate-dependent decarboxylation of 2-oxoglutarate and the subsequent addition of the resulting succinic semialdehyde-thiamine pyrophosphate anion to isochorismate to yield 2-succinyl-5-enolpyruvyl-6-hydroxy-3-cyclohexene-1-carboxylate (SEPHCHC). This Staphylococcus epidermidis (strain ATCC 35984 / DSM 28319 / BCRC 17069 / CCUG 31568 / BM 3577 / RP62A) protein is 2-succinyl-5-enolpyruvyl-6-hydroxy-3-cyclohexene-1-carboxylate synthase.